Consider the following 284-residue polypeptide: Para-Rep C3 (284 aa).

The CRESS-DNA virus Rep endonuclease domain occupies Thr-3 to Tyr-98. The RCR-1 motif lies at Val-10–Leu-13. 2 residues coordinate a divalent metal cation: Glu-36 and His-42. The RCR-2 signature appears at His-42–Gln-44. The Nuclear localization signal signature appears at Ala-51–Arg-71. Tyr-81 acts as the For DNA cleavage activity in catalysis. An RCR-3 motif is present at residues Tyr-81–Lys-84. Asp-86 is an a divalent metal cation binding site. Residues Tyr-98–His-104 carry the Nuclear localization signal motif. ATP is bound at residue Gly-174–Ser-182.

The protein belongs to the nanoviridea/circoviridae replication-associated protein family. Homooligomer (Potential). Rep binds to repeated DNA motifs (iterons). Mg(2+) is required as a cofactor. Mn(2+) serves as cofactor.

It is found in the host nucleus. The enzyme catalyses ATP + H2O = ADP + phosphate + H(+). In terms of biological role, initiates and terminates the replication only of its own subviral DNA molecule. The closed circular ssDNA genome is first converted to a superhelical dsDNA. Rep binds a specific hairpin at the genome origin of replication. Introduces an endonucleolytic nick within the intergenic region of the genome, thereby initiating the rolling circle replication (RCR). Following cleavage, binds covalently to the 5'-phosphate of DNA as a tyrosyl ester. The cleavage gives rise to a free 3'-OH that serves as a primer for the cellular DNA polymerase. The polymerase synthesizes the (+) strand DNA by rolling circle mechanism. After one round of replication, a Rep-catalyzed nucleotidyl transfer reaction releases a circular single-stranded virus genome, thereby terminating the replication. Displays origin-specific DNA cleavage, nucleotidyl transferase, ATPase and helicase activities. This chain is Para-Rep C3 (C3), found in Milk vetch dwarf C3 alphasatellite (MVDC3A).